Consider the following 147-residue polypeptide: Cyanate hydratase (147 aa).

Catalysis depends on residues arginine 88, glutamate 91, and serine 114.

The protein belongs to the cyanase family.

The catalysed reaction is cyanate + hydrogencarbonate + 3 H(+) = NH4(+) + 2 CO2. Catalyzes the reaction of cyanate with bicarbonate to produce ammonia and carbon dioxide. In Variovorax paradoxus (strain S110), this protein is Cyanate hydratase.